A 339-amino-acid polypeptide reads, in one-letter code: UDP-glucose 4-epimerase (339 aa).

NAD(+)-binding positions include 12-13, 32-37, 59-60, 81-85, asparagine 100, serine 125, tyrosine 150, lysine 154, and phenylalanine 179; these read FI, DNLCNS, DI, and FAGLK. Substrate is bound by residues serine 125 and tyrosine 150. Tyrosine 150 acts as the Proton acceptor in catalysis. Substrate-binding positions include asparagine 180, 200–201, 217–219, arginine 232, and 293–296; these read NL, SVF, and RAGD.

The protein belongs to the NAD(P)-dependent epimerase/dehydratase family. Homodimer. It depends on NAD(+) as a cofactor.

The catalysed reaction is UDP-alpha-D-glucose = UDP-alpha-D-galactose. It functions in the pathway carbohydrate metabolism; galactose metabolism. Functionally, involved in the metabolism of galactose. Plays an essential role in the incorporation of galactose into meningococcal lipopolysaccharide surface molecules, which are important for pathogenesis. Catalyzes the conversion of UDP-galactose (UDP-Gal) to UDP-glucose (UDP-Glc) through a mechanism involving the transient reduction of NAD. This is UDP-glucose 4-epimerase (galE) from Neisseria meningitidis serogroup A / serotype 4A (strain DSM 15465 / Z2491).